We begin with the raw amino-acid sequence, 144 residues long: D-aminoacyl-tRNA deacylase (144 aa).

The Gly-cisPro motif, important for rejection of L-amino acids motif lies at 137-138; it reads GP.

The protein belongs to the DTD family. As to quaternary structure, homodimer.

Its subcellular location is the cytoplasm. It catalyses the reaction glycyl-tRNA(Ala) + H2O = tRNA(Ala) + glycine + H(+). The enzyme catalyses a D-aminoacyl-tRNA + H2O = a tRNA + a D-alpha-amino acid + H(+). Its function is as follows. An aminoacyl-tRNA editing enzyme that deacylates mischarged D-aminoacyl-tRNAs. Also deacylates mischarged glycyl-tRNA(Ala), protecting cells against glycine mischarging by AlaRS. Acts via tRNA-based rather than protein-based catalysis; rejects L-amino acids rather than detecting D-amino acids in the active site. By recycling D-aminoacyl-tRNA to D-amino acids and free tRNA molecules, this enzyme counteracts the toxicity associated with the formation of D-aminoacyl-tRNA entities in vivo and helps enforce protein L-homochirality. In Acinetobacter baumannii (strain SDF), this protein is D-aminoacyl-tRNA deacylase.